Consider the following 421-residue polypeptide: Glutamyl-tRNA reductase (421 aa).

Residues 49–52 (TCNR), S109, 114–116 (EPQ), and Q120 contribute to the substrate site. Catalysis depends on C50, which acts as the Nucleophile. 189 to 194 (GLGQIG) contacts NADP(+).

It belongs to the glutamyl-tRNA reductase family. Homodimer.

The enzyme catalyses (S)-4-amino-5-oxopentanoate + tRNA(Glu) + NADP(+) = L-glutamyl-tRNA(Glu) + NADPH + H(+). The protein operates within porphyrin-containing compound metabolism; protoporphyrin-IX biosynthesis; 5-aminolevulinate from L-glutamyl-tRNA(Glu): step 1/2. Its function is as follows. Catalyzes the NADPH-dependent reduction of glutamyl-tRNA(Glu) to glutamate 1-semialdehyde (GSA). The sequence is that of Glutamyl-tRNA reductase from Limosilactobacillus reuteri (strain DSM 20016) (Lactobacillus reuteri).